The sequence spans 149 residues: Large ribosomal subunit protein bL9 (149 aa).

It belongs to the bacterial ribosomal protein bL9 family. As to quaternary structure, part of the 50S ribosomal subunit. In stalled/collided disomes (pairs of ribosomes where the leading ribosome is stalled and a second ribosome has collided with it), bL9 in the collided ribosome contacts bS6 and uL2, while it contacts only helices of the 16S rRNA in the stalled ribosome; the inter-ribosome bridge thus formed is different from that formed between normally translating ribosomes.

Binds to the 23S rRNA. This chain is Large ribosomal subunit protein bL9, found in Bacillus subtilis (strain 168).